A 512-amino-acid chain; its full sequence is Sodium/proline symporter (512 aa).

The next 13 helical transmembrane spans lie at W16–G36, I54–M74, L85–V105, I139–S159, F174–A194, F200–N220, I247–I267, I286–F306, V327–S347, F381–W401, L410–L430, A438–I458, and I467–V487.

The protein belongs to the sodium:solute symporter (SSF) (TC 2.A.21) family.

Its subcellular location is the cell membrane. It catalyses the reaction L-proline(in) + Na(+)(in) = L-proline(out) + Na(+)(out). In terms of biological role, catalyzes the sodium-dependent uptake of extracellular L-proline. Since most S.aureus strains are L-proline auxotrophs, this transporter may aid the bacterial persistence during an infection of tissues with low proline concentrations. The chain is Sodium/proline symporter (putP) from Staphylococcus aureus (strain USA300).